The primary structure comprises 330 residues: Molybdate/tungstate import ATP-binding protein WtpC (330 aa).

The region spanning 3 to 232 (LMVEGISKDY…PASEEVAKFL (230 aa)) is the ABC transporter domain. 34 to 41 (GPSGAGKT) is an ATP binding site.

This sequence belongs to the ABC transporter superfamily. Sulfate/tungstate importer (TC 3.A.1.6) family. The complex is composed of two ATP-binding proteins (WtpC), two transmembrane proteins (WtpB) and a solute-binding protein (WtpA).

The protein resides in the cell membrane. It catalyses the reaction tungstate(in) + ATP + H2O = tungstate(out) + ADP + phosphate + H(+). Its function is as follows. Part of the ABC transporter complex WtpABC involved in molybdate/tungstate import. Responsible for energy coupling to the transport system. The chain is Molybdate/tungstate import ATP-binding protein WtpC (wtpC) from Thermococcus kodakarensis (strain ATCC BAA-918 / JCM 12380 / KOD1) (Pyrococcus kodakaraensis (strain KOD1)).